The following is a 245-amino-acid chain: 8-amino-3,8-dideoxy-manno-octulosonate cytidylyltransferase (245 aa).

It belongs to the KdsB family.

Its subcellular location is the cytoplasm. It catalyses the reaction 8-amino-3,8-dideoxy-alpha-D-manno-octulosonate + CTP = CMP-8-amino-3,8-dideoxy-alpha-D-manno-oct-2-ulosonate + diphosphate. The protein operates within bacterial outer membrane biogenesis; lipopolysaccharide biosynthesis. Functionally, activates KDO8N (a required 8-carbon sugar) for incorporation into bacterial lipopolysaccharide in the Shewanella genus. The sequence is that of 8-amino-3,8-dideoxy-manno-octulosonate cytidylyltransferase from Shewanella piezotolerans (strain WP3 / JCM 13877).